Here is a 229-residue protein sequence, read N- to C-terminus: Orotidine 5'-phosphate decarboxylase (229 aa).

Substrate-binding positions include Asp10, Lys32, 59–68 (DLKFHDIPNT), Thr119, Arg180, Gln189, Gly209, and Arg210. Lys61 acts as the Proton donor in catalysis.

Belongs to the OMP decarboxylase family. Type 1 subfamily. In terms of assembly, homodimer.

It carries out the reaction orotidine 5'-phosphate + H(+) = UMP + CO2. It functions in the pathway pyrimidine metabolism; UMP biosynthesis via de novo pathway; UMP from orotate: step 2/2. Catalyzes the decarboxylation of orotidine 5'-monophosphate (OMP) to uridine 5'-monophosphate (UMP). The chain is Orotidine 5'-phosphate decarboxylase from Legionella pneumophila (strain Lens).